Consider the following 455-residue polypeptide: Phosphoglucosamine mutase (455 aa).

Serine 108 acts as the Phosphoserine intermediate in catalysis. Serine 108, aspartate 248, aspartate 250, and aspartate 252 together coordinate Mg(2+). Residue serine 108 is modified to Phosphoserine.

The protein belongs to the phosphohexose mutase family. Mg(2+) serves as cofactor. Activated by phosphorylation.

The enzyme catalyses alpha-D-glucosamine 1-phosphate = D-glucosamine 6-phosphate. Functionally, catalyzes the conversion of glucosamine-6-phosphate to glucosamine-1-phosphate. The protein is Phosphoglucosamine mutase of Leuconostoc mesenteroides subsp. mesenteroides (strain ATCC 8293 / DSM 20343 / BCRC 11652 / CCM 1803 / JCM 6124 / NCDO 523 / NBRC 100496 / NCIMB 8023 / NCTC 12954 / NRRL B-1118 / 37Y).